The primary structure comprises 212 residues: Uridine kinase (212 aa).

13-20 (GASASGKS) provides a ligand contact to ATP.

This sequence belongs to the uridine kinase family.

The protein localises to the cytoplasm. The catalysed reaction is uridine + ATP = UMP + ADP + H(+). It catalyses the reaction cytidine + ATP = CMP + ADP + H(+). It functions in the pathway pyrimidine metabolism; CTP biosynthesis via salvage pathway; CTP from cytidine: step 1/3. The protein operates within pyrimidine metabolism; UMP biosynthesis via salvage pathway; UMP from uridine: step 1/1. The protein is Uridine kinase of Shewanella amazonensis (strain ATCC BAA-1098 / SB2B).